The primary structure comprises 224 residues: PKHD-type hydroxylase Sbal195_0750 (224 aa).

Residues 78-176 enclose the Fe2OG dioxygenase domain; that stretch reads QFYPPLFNRY…RTAAFMWLQS (99 aa). Fe cation is bound by residues His96, Asp98, and His157. Arg167 contacts 2-oxoglutarate.

The cofactor is Fe(2+). Requires L-ascorbate as cofactor.

The sequence is that of PKHD-type hydroxylase Sbal195_0750 from Shewanella baltica (strain OS195).